Here is a 354-residue protein sequence, read N- to C-terminus: Major egg antigen (354 aa).

A disordered region spans residues 1 to 21; it reads MSGGKQHNAVSIPVNREQRSF. SHSP domains follow at residues 122–233 and 251–354; these read SVND…VAVR and AKGV…AITH.

This sequence belongs to the small heat shock protein (HSP20) family.

In Schistosoma mansoni (Blood fluke), this protein is Major egg antigen.